The sequence spans 399 residues: Tetracycline resistance protein, class A (399 aa).

12 consecutive transmembrane segments (helical) span residues 7–29 (LIVILSTVALDAVGIGLIMPVLP), 44–66 (HYGILLALYALMQFACAPVLGAL), 73–95 (RPVLLVSLAGAAVDYAIMATAPF), 99–121 (LYIGRIVAGITGATGAVAGAYIA), 133–155 (FGFMSACFGFGMVAGPVLGGLMG), 160–182 (HAPFFAAAALNGLNFLTGCFLLP), 203–225 (FRWARGMTVVAALMAVFFIMQLV), 245–267 (ATTIGISLAAFGILHSLAQAMIT), 279–298 (ALMLGMIADGTGYILLAFAT), 302–324 (MAFPIMVLLASGGIGMPALQAML), 336–358 (LQGSLAALTSLTSIVGPLLFTAI), and 368–390 (GWAWIAGAALYLLCLPALRRGLW).

It belongs to the major facilitator superfamily. TCR/Tet family.

It is found in the cell inner membrane. In terms of biological role, resistance to tetracycline by an active tetracycline efflux. This is an energy-dependent process that decreases the accumulation of the antibiotic in whole cells. This protein functions as a metal-tetracycline/H(+) antiporter. This Escherichia coli protein is Tetracycline resistance protein, class A (tetA).